Consider the following 143-residue polypeptide: ATP synthase F(0) complex subunit C2, mitochondrial (143 aa).

A mitochondrion-targeting transit peptide spans M1 to R68. The chain crosses the membrane as a helical span at residues V84–Y104. N6,N6,N6-trimethyllysine is present on K111. Residues I119 to I139 traverse the membrane as a helical segment.

The protein belongs to the ATPase C chain family. In terms of assembly, F-type ATPases have 2 components, CF(1) - the catalytic core - and CF(0) - the membrane proton channel. CF(1) has five subunits: alpha(3), beta(3), gamma(1), delta(1), epsilon(1). CF(0) has three main subunits: a, b and c. Interacts with DNAJC30; interaction is direct. Post-translationally, trimethylated by ATPSCKMT at Lys-111. Methylation is required for proper incorporation of the C subunit into the ATP synthase complex and mitochondrial respiration.

It is found in the mitochondrion membrane. Mitochondrial membrane ATP synthase (F(1)F(0) ATP synthase or Complex V) produces ATP from ADP in the presence of a proton gradient across the membrane which is generated by electron transport complexes of the respiratory chain. F-type ATPases consist of two structural domains, F(1) - containing the extramembraneous catalytic core and F(0) - containing the membrane proton channel, linked together by a central stalk and a peripheral stalk. During catalysis, ATP synthesis in the catalytic domain of F(1) is coupled via a rotary mechanism of the central stalk subunits to proton translocation. Part of the complex F(0) domain. A homomeric c-ring of probably 10 subunits is part of the complex rotary element. The sequence is that of ATP synthase F(0) complex subunit C2, mitochondrial from Bos taurus (Bovine).